We begin with the raw amino-acid sequence, 230 residues long: UPF0173 metal-dependent hydrolase Rsph17029_0942 (230 aa).

It belongs to the UPF0173 family.

In Cereibacter sphaeroides (strain ATCC 17029 / ATH 2.4.9) (Rhodobacter sphaeroides), this protein is UPF0173 metal-dependent hydrolase Rsph17029_0942.